Consider the following 245-residue polypeptide: 2,3-bisphosphoglycerate-dependent phosphoglycerate mutase (245 aa).

Residues 9–16, 22–23, R61, 88–91, K99, 115–116, and 181–182 contribute to the substrate site; these read RHGESEWN, TG, ERHY, RR, and GN. The active-site Tele-phosphohistidine intermediate is the H10. E88 (proton donor/acceptor) is an active-site residue.

Belongs to the phosphoglycerate mutase family. BPG-dependent PGAM subfamily.

The catalysed reaction is (2R)-2-phosphoglycerate = (2R)-3-phosphoglycerate. Its pathway is carbohydrate degradation; glycolysis; pyruvate from D-glyceraldehyde 3-phosphate: step 3/5. Functionally, catalyzes the interconversion of 2-phosphoglycerate and 3-phosphoglycerate. The protein is 2,3-bisphosphoglycerate-dependent phosphoglycerate mutase of Nocardia farcinica (strain IFM 10152).